The following is a 958-amino-acid chain: N-terminal acetyltransferase B complex subunit NAA25 homolog (958 aa).

TPR repeat units follow at residues 7-42, 78-111, and 320-353; these read AVLE…HPNT, ELTL…DPSE, and FFAY…MLEY.

The protein belongs to the MDM20/NAA25 family. In terms of assembly, component of the N-terminal acetyltransferase B (NatB) complex. Interacts with acer-1. In terms of tissue distribution, expressed in germline and somatic cells.

It is found in the cytoplasm. The protein resides in the nucleus. Its subcellular location is the chromosome. Non-catalytic subunit of the NatB complex which catalyzes acetylation of the N-terminal methionine residues of proteins beginning with Met-Asp or Met-Glu. Required for chromosome organization and arrangement; specifically for assembly of the central region components of the synaptonemal complex onto chromosomes during meiosis and for DNA double stranded break formation and repair. Acts downstream of xnd-1 to regulate levels of histone acetylation in germ and somatic cell nuclei by controlling acetyl-CoA production through antagonizing the acetyl-CoA hydrolase activity of acer-1. In Caenorhabditis elegans, this protein is N-terminal acetyltransferase B complex subunit NAA25 homolog.